We begin with the raw amino-acid sequence, 248 residues long: 14-3-3 protein sigma (248 aa).

Phosphoserine is present on residues S5, S74, and S248.

Belongs to the 14-3-3 family. As to quaternary structure, homodimer. Interacts with KRT17 and SAMSN1. Found in a complex with XPO7, EIF4A1, ARHGAP1, VPS26A, VPS29 and VPS35. Interacts with GAB2. Interacts with SRPK2. Interacts with COPS6. Interacts with COP1; this interaction leads to proteasomal degradation. Interacts with the 'Thr-369' phosphorylated form of DAPK2. Interacts with PI4KB. Interacts with SLITRK1. Interacts with LRRK2; this interaction is dependent on LRRK2 phosphorylation. Interacts with PKP3 (via N-terminus); the interaction maintains the cytoplasmic pool of PKP3, facilitates PKP3 exchange at desmosomes and restricts PKP3 localization to existing desmosome cell junctions. Interacts with LCP2. Post-translationally, ubiquitinated. Ubiquitination by RFFL induces proteasomal degradation and indirectly regulates p53/TP53 activation.

It is found in the cytoplasm. The protein resides in the nucleus. Its subcellular location is the secreted. In terms of biological role, adapter protein implicated in the regulation of a large spectrum of both general and specialized signaling pathways. Binds to a large number of partners, usually by recognition of a phosphoserine or phosphothreonine motif. Binding generally results in the modulation of the activity of the binding partner. Promotes cytosolic retention of GBP1 GTPase by binding to phosphorylated GBP1, thereby inhibiting the innate immune response. Also acts as a TP53/p53-regulated inhibitor of G2/M progression. When bound to KRT17, regulates protein synthesis and epithelial cell growth by stimulating Akt/mTOR pathway. Acts to maintain desmosome cell junction adhesion in epithelial cells via interacting with and sequestering PKP3 to the cytoplasm, thereby restricting its translocation to existing desmosome structures and therefore maintaining desmosome protein homeostasis. Also acts to facilitate PKP3 exchange at desmosome plaques, thereby maintaining keratinocyte intercellular adhesion. May also regulate MDM2 autoubiquitination and degradation and thereby activate p53/TP53. The polypeptide is 14-3-3 protein sigma (SFN) (Bos taurus (Bovine)).